We begin with the raw amino-acid sequence, 260 residues long: MEPKARCSDSQRGGPCTNHEPPALEEGGRRHRRARAGSSSGALGLQLRPRVRPQRRAAAAAAAAAAAAAAATAASAAASAILGGRAAAAQPIGHPDALERAARANLRARRGDAWRGRGAPQRRAPAEARALGAASRALARRGAAPAAPLRGQPGPALPPPGPEAEPALPGGGQLAVAGPAAPEAPGLGLGGGLDPVRPRGGGRTRGHPRGAGPGVRRGGLLGRGNLPHIGGGHIPLGLVFLVQPAAGGRALLLDQPAVAG.

Disordered stretches follow at residues 1–50 (MEPK…LRPR) and 108–219 (ARRG…RRGG). Composition is skewed to low complexity over residues 36-48 (AGSSSGALGLQLR), 116-154 (GRGAPQRRAPAEARALGAASRALARRGAAPAAPLRGQPG), and 164-186 (AEPALPGGGQLAVAGPAAPEAPG). Residues 104–130 (ANLRARRGDAWRGRGAPQRRAPAEARA) form a required for nucleolar localization region. Gly residues-rich tracts occupy residues 187 to 199 (LGLGGGLDPVRPR) and 209 to 219 (RGAGPGVRRGG).

In terms of assembly, interacts with C1QBP; the interaction results in nucleolar localization of C1QBP, probably due to prevention of C1QBP maturation and redirection from mitochondria to nucleoli. Post-translationally, undergoes proteolytic cleavage to produce a secreted C-terminal fragment.

It is found in the nucleus. Its subcellular location is the nucleolus. The protein localises to the secreted. In Homo sapiens (Human), this protein is POLG alternative reading frame.